The chain runs to 236 residues: SERTA domain-containing protein 1 (236 aa).

Positions 1 to 20 (MLSKGLKRKREEEEEKEPLA) are disordered. The 48-residue stretch at 38–85 (PAVASSSLFDLSVLKLHHSLQQSEPDLRHLVLVVNTLRRIQASMAPAA) folds into the SERTA domain. The tract at residues 189 to 211 (PASEGLKPGPEDGPGKEEAPELD) is disordered. Residues 197–207 (GPEDGPGKEEA) are compositionally biased toward basic and acidic residues.

Interacts with the PHD-bromodomain of TIF1, TRIM28/TIF1B and p300/CBP. Interacts with E2F1 and TFDP1; modulates transactivation activity of TFDP1/E2F complexes. Also interacts with CDK4. In terms of processing, polyubiquitinated, which promotes proteasomal degradation.

Functionally, acts at E2F-responsive promoters as coregulator to integrate signals provided by PHD- and/or bromodomain-containing transcription factors. Stimulates E2F1/TFDP1 transcriptional activity. Renders the activity of cyclin D1/CDK4 resistant to the inhibitory effects of CDKN2A/p16INK4A. The polypeptide is SERTA domain-containing protein 1 (SERTAD1) (Homo sapiens (Human)).